Here is a 385-residue protein sequence, read N- to C-terminus: DNA replication and repair protein RecF (385 aa).

30 to 37 is an ATP binding site; sequence GPNGYGKT.

This sequence belongs to the RecF family.

The protein resides in the cytoplasm. In terms of biological role, the RecF protein is involved in DNA metabolism; it is required for DNA replication and normal SOS inducibility. RecF binds preferentially to single-stranded, linear DNA. It also seems to bind ATP. The chain is DNA replication and repair protein RecF from Mycobacterium bovis (strain ATCC BAA-935 / AF2122/97).